The chain runs to 362 residues: Probable dual-specificity RNA methyltransferase RlmN (362 aa).

Glu91 acts as the Proton acceptor in catalysis. Positions 97 to 329 (QHYGLSVCVT…KKNGVNCVVR (233 aa)) constitute a Radical SAM core domain. Cys104 and Cys340 are disulfide-bonded. Positions 111, 115, and 118 each coordinate [4Fe-4S] cluster. S-adenosyl-L-methionine is bound by residues 163–164 (GE), Ser195, 218–220 (SLH), and Asn296. Cys340 serves as the catalytic S-methylcysteine intermediate.

Belongs to the radical SAM superfamily. RlmN family. The cofactor is [4Fe-4S] cluster.

The protein localises to the cytoplasm. The catalysed reaction is adenosine(2503) in 23S rRNA + 2 reduced [2Fe-2S]-[ferredoxin] + 2 S-adenosyl-L-methionine = 2-methyladenosine(2503) in 23S rRNA + 5'-deoxyadenosine + L-methionine + 2 oxidized [2Fe-2S]-[ferredoxin] + S-adenosyl-L-homocysteine. It carries out the reaction adenosine(37) in tRNA + 2 reduced [2Fe-2S]-[ferredoxin] + 2 S-adenosyl-L-methionine = 2-methyladenosine(37) in tRNA + 5'-deoxyadenosine + L-methionine + 2 oxidized [2Fe-2S]-[ferredoxin] + S-adenosyl-L-homocysteine. Its function is as follows. Specifically methylates position 2 of adenine 2503 in 23S rRNA and position 2 of adenine 37 in tRNAs. The polypeptide is Probable dual-specificity RNA methyltransferase RlmN (Streptococcus gordonii (strain Challis / ATCC 35105 / BCRC 15272 / CH1 / DL1 / V288)).